Reading from the N-terminus, the 466-residue chain is Dynein axonemal assembly factor 11 (466 aa).

4 LRR repeats span residues 22–43 (SLEE…DKWC), 45–66 (DLKI…SKLK), 67–88 (KLEY…EGCE), and 89–110 (ELAK…KNLQ). In terms of domain architecture, LRRCT spans 123-161 (NPCASFDHYREFVVATLPQLKWLDGKEIEPSERIKALQD). Residues 178–204 (LKRAKLKEEAQRKHQEEDKNEDKRSNA) are a coiled coil. Over residues 185-202 (EEAQRKHQEEDKNEDKRS) the composition is skewed to basic and acidic residues. Disordered stretches follow at residues 185–206 (EEAQ…NAGF), 268–288 (MEKQ…VKPP), and 391–466 (AFKS…PPLI). Basic residues predominate over residues 269 to 287 (EKQRKKQEKLSEKKKKVKP). A CS domain is found at 301–396 (VNEPKIDFSL…GGQRAFKSMK (96 aa)). Composition is skewed to basic and acidic residues over residues 398-425 (TSDR…KHSF) and 433-445 (QEKK…RPEP). Residues 450–460 (SEEDPTFEDNP) are compositionally biased toward acidic residues.

The protein belongs to the tilB family. Interacts (via CS domain) with ZMYND10 (via C-terminus). Expressed predominantly in testis and in nasal epithelial cells.

The protein resides in the cytoplasm. Its subcellular location is the cell projection. It localises to the cilium. It is found in the dynein axonemal particle. The protein localises to the flagellum. In terms of biological role, involved in dynein arm assembly, is important for expression and transporting outer dynein arm (ODA) proteins from the cytoplasm to the cilia. Acts as a crucial component in the formation and motility of spermatozoal flagella. This chain is Dynein axonemal assembly factor 11, found in Homo sapiens (Human).